The chain runs to 319 residues: L-lactate dehydrogenase 2 (319 aa).

Residues V17, D38, K43, Y69, and 83-84 each bind NAD(+); that span reads GA. 2 residues coordinate substrate: Q86 and R92. Residues S105, 122 to 124, and S147 contribute to the NAD(+) site; that span reads ATN. 124–127 contacts substrate; it reads NPVD. 152-155 is a substrate binding site; the sequence is DSGR. Positions 157 and 172 each coordinate beta-D-fructose 1,6-bisphosphate. The Proton acceptor role is filled by H179. Residue Y224 is modified to Phosphotyrosine. T233 lines the substrate pocket.

The protein belongs to the LDH/MDH superfamily. LDH family. Homotetramer.

Its subcellular location is the cytoplasm. It catalyses the reaction (S)-lactate + NAD(+) = pyruvate + NADH + H(+). Its pathway is fermentation; pyruvate fermentation to lactate; (S)-lactate from pyruvate: step 1/1. With respect to regulation, allosterically activated by fructose 1,6-bisphosphate (FBP). In terms of biological role, catalyzes the conversion of lactate to pyruvate. The polypeptide is L-lactate dehydrogenase 2 (Peribacillus psychrosaccharolyticus (Bacillus psychrosaccharolyticus)).